A 548-amino-acid polypeptide reads, in one-letter code: Membrane protein insertase YidC (548 aa).

Residues 6 to 26 (NLLVIALLFVSFMIWQAWEQD) traverse the membrane as a helical segment. The interval 28–54 (NPQPQTQQTTQTTTTAAGSAADQGVPA) is disordered. Positions 29–42 (PQPQTQQTTQTTTT) are enriched in low complexity. 4 consecutive transmembrane segments (helical) span residues 350–370 (FVGN…GIMY), 424–444 (FPLI…MGSI), 458–478 (LSAQ…MFFI), and 499–519 (PVIF…YYIV).

It belongs to the OXA1/ALB3/YidC family. Type 1 subfamily. As to quaternary structure, interacts with the Sec translocase complex via SecD. Specifically interacts with transmembrane segments of nascent integral membrane proteins during membrane integration.

The protein resides in the cell inner membrane. Functionally, required for the insertion and/or proper folding and/or complex formation of integral membrane proteins into the membrane. Involved in integration of membrane proteins that insert both dependently and independently of the Sec translocase complex, as well as at least some lipoproteins. Aids folding of multispanning membrane proteins. The protein is Membrane protein insertase YidC of Salmonella arizonae (strain ATCC BAA-731 / CDC346-86 / RSK2980).